A 347-amino-acid chain; its full sequence is NADH-ubiquinone oxidoreductase chain 2 (347 aa).

9 helical membrane-spanning segments follow: residues 1 to 21 (MNPF…MIVM), 59 to 79 (YFMT…INLL), 93 to 115 (TASM…HFWV), 149 to 169 (INPN…GWGG), 178 to 198 (IMAY…IYNP), 201 to 221 (TILN…MFAL), 239 to 259 (IITT…PLTG), 274 to 294 (DSII…YFYM), and 325 to 345 (LLPT…MLVV).

This sequence belongs to the complex I subunit 2 family. As to quaternary structure, core subunit of respiratory chain NADH dehydrogenase (Complex I) which is composed of 45 different subunits. Interacts with TMEM242.

The protein resides in the mitochondrion inner membrane. It catalyses the reaction a ubiquinone + NADH + 5 H(+)(in) = a ubiquinol + NAD(+) + 4 H(+)(out). Core subunit of the mitochondrial membrane respiratory chain NADH dehydrogenase (Complex I) which catalyzes electron transfer from NADH through the respiratory chain, using ubiquinone as an electron acceptor. Essential for the catalytic activity and assembly of complex I. The chain is NADH-ubiquinone oxidoreductase chain 2 from Hippopotamus amphibius (Hippopotamus).